We begin with the raw amino-acid sequence, 366 residues long: DENN domain-containing protein 10 (366 aa).

The region spanning 1 to 147 (MATSISLEDS…RVFNRGQFDV (147 aa)) is the uDENN domain. A cDENN domain is found at 169 to 309 (IKDIIQLFGE…EEITDQNVIK (141 aa)). Residues 311–366 (LNLKMKELLTKLESLKETNEETGKSSITLESLETRKLPNGMSTFLFNIANAEGLNG) form the dDENN domain.

It belongs to the DENND10 family.

It localises to the late endosome. Its function is as follows. Guanine nucleotide exchange factor (GEF) which may be involved in the regulation of homeostasis of late endocytic pathway, including endosomal positioning, maturation and secretion. This chain is DENN domain-containing protein 10 (dennd10), found in Dictyostelium discoideum (Social amoeba).